A 161-amino-acid polypeptide reads, in one-letter code: NADH-quinone oxidoreductase subunit I (161 aa).

2 consecutive 4Fe-4S ferredoxin-type domains span residues 53–82 and 92–121; these read RRYP…IEAE and TRYD…EGPN. 8 residues coordinate [4Fe-4S] cluster: Cys-62, Cys-65, Cys-68, Cys-72, Cys-101, Cys-104, Cys-107, and Cys-111.

This sequence belongs to the complex I 23 kDa subunit family. NDH-1 is composed of 14 different subunits. Subunits NuoA, H, J, K, L, M, N constitute the membrane sector of the complex. The cofactor is [4Fe-4S] cluster.

The protein resides in the cell inner membrane. The enzyme catalyses a quinone + NADH + 5 H(+)(in) = a quinol + NAD(+) + 4 H(+)(out). Its function is as follows. NDH-1 shuttles electrons from NADH, via FMN and iron-sulfur (Fe-S) centers, to quinones in the respiratory chain. The immediate electron acceptor for the enzyme in this species is believed to be ubiquinone. Couples the redox reaction to proton translocation (for every two electrons transferred, four hydrogen ions are translocated across the cytoplasmic membrane), and thus conserves the redox energy in a proton gradient. This chain is NADH-quinone oxidoreductase subunit I, found in Hyphomonas neptunium (strain ATCC 15444).